The sequence spans 583 residues: CD166 antigen (583 aa).

Residues 1–27 (MASKVSPSCRLVFCLLISAAVLRPGLG) form the signal peptide. 2 Ig-like V-type domains span residues 28-120 (WYTV…TEDN) and 125-234 (PTLV…KTIY). Over 28–527 (WYTVNSAYGD…NREKVNDQAK (500 aa)) the chain is Extracellular. Intrachain disulfides connect C43–C113 and C157–C220. Residues N95, N167, N265, N306, N361, N457, N480, and N499 are each glycosylated (N-linked (GlcNAc...) asparagine). 3 consecutive Ig-like C2-type domains span residues 245 to 328 (PTEQ…TTIT), 333 to 409 (DLSL…ESLT), and 416 to 501 (PQIK…LNVS). Disulfide bonds link C270–C313, C354–C392, and C435–C485. A helical transmembrane segment spans residues 528-549 (LIVGIVVGLLLAALVAGVVYWL). Residues 550–583 (YMKKSKTASKHVNKDLGNMEENKKLEENNHKTEA) are Cytoplasmic-facing. Positions 562–583 (NKDLGNMEENKKLEENNHKTEA) are disordered. Residues 569 to 583 (EENKKLEENNHKTEA) show a composition bias toward basic and acidic residues.

As to quaternary structure, homodimer. Interacts (via extracellular domain) with CD6 (via extracellular domain). Homodimerization and interaction with CD6 involve the same region and cannot occur simultaneously. The affinity for CD6 is much higher than the affinity for self-association. Interacts (via glycosylated extracellular domain) with LGALS1 and LGALS3. Interaction with LGALS1 or LGALS3 inhibits interaction with CD6. In terms of processing, glycosylated. As to expression, detected on brain motor neurons, in differentiating retinal ganglion cells and in adult retina. Detected on leukocytes and on lymphatic endothelial cells. Detected in spleen B cells and T-cells (at protein level). Detected in adult brain and embryonic spinal cord. Expressed at high levels in the brain, and lung, and at lower levels in the liver, and the kidney, as well as by activated leukocytes.

It localises to the cell membrane. The protein localises to the cell projection. Its subcellular location is the axon. It is found in the dendrite. Its function is as follows. Cell adhesion molecule that mediates both heterotypic cell-cell contacts via its interaction with CD6, as well as homotypic cell-cell contacts. Promotes T-cell activation and proliferation via its interactions with CD6. Contributes to the formation and maturation of the immunological synapse via its interactions with CD6. Mediates homotypic interactions with cells that express ALCAM. Mediates attachment of dendritic cells onto endothelial cells via homotypic interaction. Inhibits endothelial cell migration and promotes endothelial tube formation via homotypic interactions. Required for normal organization of the lymph vessel network. Required for normal hematopoietic stem cell engraftment in the bone marrow. Plays a role in hematopoiesis; required for normal numbers of hematopoietic stem cells in bone marrow. Promotes in vitro osteoblast proliferation and differentiation. Promotes neurite extension, axon growth and axon guidance; axons grow preferentially on surfaces that contain ALCAM. Mediates outgrowth and pathfinding for retinal ganglion cell axons. The protein is CD166 antigen (Alcam) of Mus musculus (Mouse).